The chain runs to 357 residues: MESRDLNLRERQVLGIIIQAYVVSAAPVGSRYIARNCNLGLSDATIRNVMADLEDEGYISQPHTSAGRTPTDKGYRYYVDLIMKVRRVNDEEKKRIDADFGQLTTERRGSSSEVLLSAAKVLGSISRQLSVVLSPALSNAVFEKLDMVLLSSTRMMVILSIQSLIVKTIVMELDLAVSRQEVSGVVDLLNQRLSGLTLSEIRKTISMRLSDCLADASLINFVVRSAGQLFDETPIIERLYISGAGYIVDQPEFKQPEKVRDFITMIEDKFSVAKLVERNRIYSETVHPSRMEVSISIGKENRERKAEDLTIVSTPYYVGGMMGKLGILGPTRMDYGHAVSVLNYMADCLSATLSEVN.

It belongs to the HrcA family.

Functionally, negative regulator of class I heat shock genes (grpE-dnaK-dnaJ and groELS operons). Prevents heat-shock induction of these operons. The chain is Heat-inducible transcription repressor HrcA from Chlorobium phaeobacteroides (strain DSM 266 / SMG 266 / 2430).